Here is a 471-residue protein sequence, read N- to C-terminus: MKMPLNIGLVHFIGIGGIGMSGIAEVLHNLGYKVQGSDQSDSANVQRLREKGIEVFVGHKAENLGDAEVIVVSTAIKKNNPELVAAREKLLPVVRRAEMLAELMRFRRAVAIGGTHGKTTTTSLVAALLDAGHLDPTVINGGIINAYGTNARMGDGDWMVVEADESDGTFLKLPADIAVVTNIDPEHLDHYGNFDAVRAAFRQFVENVPFYGFGVMCLDHPEVQALVSRIEDRRIITYGSNPQAEVRFVNQRMDGAASLFDVVIRSRKGEATEIKDLRLPMPGLHNVSNATAAIAVAHELGISSDDIRRGLGSFGGVKRRFTHTGSWNGVEIFDDYGHHPVEIRAVLKAAREATSQAGGRVVAIVQPHRYTRLASLFDEFAACFNDADTVIVAPVYTAGEEPIEGVNSEELVSRIKTAGHRDARYATGPEALAPLVASIAQAGDFVVCLGAGNVTQWAYALPKELAEQGKK.

Gly114–Thr120 lines the ATP pocket.

The protein belongs to the MurCDEF family.

It is found in the cytoplasm. It carries out the reaction UDP-N-acetyl-alpha-D-muramate + L-alanine + ATP = UDP-N-acetyl-alpha-D-muramoyl-L-alanine + ADP + phosphate + H(+). It participates in cell wall biogenesis; peptidoglycan biosynthesis. Functionally, cell wall formation. The protein is UDP-N-acetylmuramate--L-alanine ligase of Brucella abortus (strain S19).